Here is a 93-residue protein sequence, read N- to C-terminus: Cell division protein FtsB (93 aa).

Topologically, residues 1 to 3 (MRI) are cytoplasmic. A helical transmembrane segment spans residues 4-21 (FVIALTLLFGWLQYTLWF). At 22-93 (GKNGVSDYYT…FYRIVDEEEH (72 aa)) the chain is on the periplasmic side. Positions 31–75 (TVEDEIEVQQQVNSKLQARNNEMFAEIDDLRQGLDAIEERARHEL) form a coiled coil.

The protein belongs to the FtsB family. In terms of assembly, part of a complex composed of FtsB, FtsL and FtsQ.

The protein resides in the cell inner membrane. Essential cell division protein. May link together the upstream cell division proteins, which are predominantly cytoplasmic, with the downstream cell division proteins, which are predominantly periplasmic. The protein is Cell division protein FtsB of Vibrio campbellii (strain ATCC BAA-1116).